The sequence spans 105 residues: Large ribosomal subunit protein uL24 (105 aa).

It belongs to the universal ribosomal protein uL24 family. Part of the 50S ribosomal subunit.

In terms of biological role, one of two assembly initiator proteins, it binds directly to the 5'-end of the 23S rRNA, where it nucleates assembly of the 50S subunit. Functionally, one of the proteins that surrounds the polypeptide exit tunnel on the outside of the subunit. The sequence is that of Large ribosomal subunit protein uL24 from Vibrio atlanticus (strain LGP32) (Vibrio splendidus (strain Mel32)).